We begin with the raw amino-acid sequence, 232 residues long: Fibrillarin-like rRNA/tRNA 2'-O-methyltransferase (232 aa).

S-adenosyl-L-methionine is bound by residues 89 to 90 (TT), 108 to 109 (EF), 133 to 134 (DA), and 153 to 156 (DIAQ).

The protein belongs to the methyltransferase superfamily. Fibrillarin family. Interacts with nop5. Component of box C/D small ribonucleoprotein (sRNP) particles that contain rpl7ae, FlpA and nop5, plus a guide RNA.

Involved in pre-rRNA and tRNA processing. Utilizes the methyl donor S-adenosyl-L-methionine to catalyze the site-specific 2'-hydroxyl methylation of ribose moieties in rRNA and tRNA. Site specificity is provided by a guide RNA that base pairs with the substrate. Methylation occurs at a characteristic distance from the sequence involved in base pairing with the guide RNA. This is Fibrillarin-like rRNA/tRNA 2'-O-methyltransferase from Saccharolobus islandicus (strain M.16.27) (Sulfolobus islandicus).